We begin with the raw amino-acid sequence, 148 residues long: 3-hydroxyacyl-[acyl-carrier-protein] dehydratase FabZ (148 aa).

The active site involves His-48.

The protein belongs to the thioester dehydratase family. FabZ subfamily.

It localises to the cytoplasm. It catalyses the reaction a (3R)-hydroxyacyl-[ACP] = a (2E)-enoyl-[ACP] + H2O. Functionally, involved in unsaturated fatty acids biosynthesis. Catalyzes the dehydration of short chain beta-hydroxyacyl-ACPs and long chain saturated and unsaturated beta-hydroxyacyl-ACPs. The polypeptide is 3-hydroxyacyl-[acyl-carrier-protein] dehydratase FabZ (Campylobacter concisus (strain 13826)).